Here is a 544-residue protein sequence, read N- to C-terminus: ATP synthase subunit alpha (544 aa).

173 to 180 (GDRQTGKT) contributes to the ATP binding site. The tract at residues 513–544 (GSDGQIIGGGEPESDGEDVDVEQEQIVRQKRG) is disordered. The segment covering 524–535 (PESDGEDVDVEQ) has biased composition (acidic residues).

This sequence belongs to the ATPase alpha/beta chains family. In terms of assembly, F-type ATPases have 2 components, CF(1) - the catalytic core - and CF(0) - the membrane proton channel. CF(1) has five subunits: alpha(3), beta(3), gamma(1), delta(1), epsilon(1). CF(0) has three main subunits: a(1), b(2) and c(9-12). The alpha and beta chains form an alternating ring which encloses part of the gamma chain. CF(1) is attached to CF(0) by a central stalk formed by the gamma and epsilon chains, while a peripheral stalk is formed by the delta and b chains.

The protein localises to the cell membrane. The catalysed reaction is ATP + H2O + 4 H(+)(in) = ADP + phosphate + 5 H(+)(out). In terms of biological role, produces ATP from ADP in the presence of a proton gradient across the membrane. The alpha chain is a regulatory subunit. The polypeptide is ATP synthase subunit alpha (Beutenbergia cavernae (strain ATCC BAA-8 / DSM 12333 / CCUG 43141 / JCM 11478 / NBRC 16432 / NCIMB 13614 / HKI 0122)).